Reading from the N-terminus, the 474-residue chain is UDP-N-acetylmuramate--L-alanine ligase (474 aa).

123–129 is a binding site for ATP; it reads GTHGKTT.

It belongs to the MurCDEF family.

Its subcellular location is the cytoplasm. It carries out the reaction UDP-N-acetyl-alpha-D-muramate + L-alanine + ATP = UDP-N-acetyl-alpha-D-muramoyl-L-alanine + ADP + phosphate + H(+). It functions in the pathway cell wall biogenesis; peptidoglycan biosynthesis. Functionally, cell wall formation. In Alcanivorax borkumensis (strain ATCC 700651 / DSM 11573 / NCIMB 13689 / SK2), this protein is UDP-N-acetylmuramate--L-alanine ligase.